Here is a 154-residue protein sequence, read N- to C-terminus: MVDVAFVCLGNICRSPMAEAIMRQRLKDRNIHDIKVHSRGTGSWNLGEPPHEGTQKILNKHNIPFDGMISELFEATDDFDYIVAMDQSNVDNIKFINPNLKGQLFKLLEFSNMEESDVPDPYYTNNFEGVYDMVLSSCDNLIDYIVKDANLKEG.

Residue C8 is the Nucleophile of the active site. R14 is a catalytic residue. Catalysis depends on D120, which acts as the Proton donor.

This sequence belongs to the low molecular weight phosphotyrosine protein phosphatase family. As to quaternary structure, interacts with host CORO1A. In terms of processing, phosphorylations at Tyr-122 and Tyr-123 are essential for phosphatase activity.

The protein resides in the secreted. The enzyme catalyses O-phospho-L-tyrosyl-[protein] + H2O = L-tyrosyl-[protein] + phosphate. Functionally, secreted tyrosine phosphatase that plays a critical role during infection as a bacterial effector protein that counteracts host defenses. Required for intramacrophage survival. The protein is Low molecular weight protein-tyrosine-phosphatase PtpA (ptpA) of Staphylococcus aureus (strain bovine RF122 / ET3-1).